The sequence spans 191 residues: Oleosin 20.3 kDa (191 aa).

N-acetylalanine is present on Ala2. The tract at residues 2–54 (ANVDRDRRVHVDRTDKRVHQPNYEDDVGFGGYGGYGAGSDYKSRGPSTNQILA) is polar. 2 helical membrane-spanning segments follow: residues 52-72 (ILALIAGVPIGGTLLTLAGLT) and 99-119 (LTIGLAVTGILASGLFGLTGL). Positions 55 to 128 (LIAGVPIGGT…LSSVSWVLNY (74 aa)) are hydrophobic.

Belongs to the oleosin family.

The protein localises to the lipid droplet. It is found in the membrane. Functionally, may have a structural role to stabilize the lipid body during desiccation of the seed by preventing coalescence of the oil. Probably interacts with both lipid and phospholipid moieties of lipid bodies. May also provide recognition signals for specific lipase anchorage in lipolysis during seedling growth. This Arabidopsis thaliana (Mouse-ear cress) protein is Oleosin 20.3 kDa (OL2).